Here is a 130-residue protein sequence, read N- to C-terminus: Small ribosomal subunit protein uS8 (130 aa).

The protein belongs to the universal ribosomal protein uS8 family. Part of the 30S ribosomal subunit.

In terms of biological role, one of the primary rRNA binding proteins, it binds directly to 16S rRNA central domain where it helps coordinate assembly of the platform of the 30S subunit. This is Small ribosomal subunit protein uS8 from Methanosphaera stadtmanae (strain ATCC 43021 / DSM 3091 / JCM 11832 / MCB-3).